A 503-amino-acid chain; its full sequence is MRPVLVVDFGSQYSQLVVRAIRECGYYAEFASPSISAAECLALSPIAIFLSGGPASAYKDNAPKLDEEIFNCGIPIFGICYGFQLLAQAFGGSVKKANAPEYGPADITIVNKAFFSGQPDRQTVWMSHGDSVIRAPKNFCILSTSQDAVLSFCNRDRTIAGVQWHPEVKHSRFGKHTIKAFLSSFAAPNWDPEQTICGTVDSIRKTVGCKRVLCALSGGVDSVVAATLTHRAIGDRLRCVFVDHGLLRLNEREQVEEYCSSLGLNVSTYDASDCFLSALSGIRDSEQKRKVIGREFIACFSKLQERFDIKPHFLLQGTLYPDLVESGATPGGATIKSHHNVGGLSDNLGFELLEPLKYLFKDEVRKIGLQLGIPKHIVHRQPFPGPGLAIRIIGEVTNKKLSILRAADAIVRHELRDWTDIWQCPVILLSDVQSVGVRGDSRSCGFPIVIRPVSSDDAMTADWYRLPYDVLARISGRITNEIPEIVRVVLDITPKPPATIEWE.

The 187-residue stretch at 3-189 (PVLVVDFGSQ…AFLSSFAAPN (187 aa)) folds into the Glutamine amidotransferase type-1 domain. The active-site Nucleophile is the C80. Residues H165 and E167 contribute to the active site. In terms of domain architecture, GMPS ATP-PPase spans 190–380 (WDPEQTICGT…LGIPKHIVHR (191 aa)). 217–223 (SGGVDSV) provides a ligand contact to ATP.

Homodimer.

It carries out the reaction XMP + L-glutamine + ATP + H2O = GMP + L-glutamate + AMP + diphosphate + 2 H(+). Its pathway is purine metabolism; GMP biosynthesis; GMP from XMP (L-Gln route): step 1/1. In terms of biological role, catalyzes the synthesis of GMP from XMP. The polypeptide is GMP synthase [glutamine-hydrolyzing] (Tropheryma whipplei (strain TW08/27) (Whipple's bacillus)).